The primary structure comprises 258 residues: Imidazole glycerol phosphate synthase subunit HisF (258 aa).

Residues D11 and D130 contribute to the active site.

This sequence belongs to the HisA/HisF family. As to quaternary structure, heterodimer of HisH and HisF.

It localises to the cytoplasm. The catalysed reaction is 5-[(5-phospho-1-deoxy-D-ribulos-1-ylimino)methylamino]-1-(5-phospho-beta-D-ribosyl)imidazole-4-carboxamide + L-glutamine = D-erythro-1-(imidazol-4-yl)glycerol 3-phosphate + 5-amino-1-(5-phospho-beta-D-ribosyl)imidazole-4-carboxamide + L-glutamate + H(+). Its pathway is amino-acid biosynthesis; L-histidine biosynthesis; L-histidine from 5-phospho-alpha-D-ribose 1-diphosphate: step 5/9. Functionally, IGPS catalyzes the conversion of PRFAR and glutamine to IGP, AICAR and glutamate. The HisF subunit catalyzes the cyclization activity that produces IGP and AICAR from PRFAR using the ammonia provided by the HisH subunit. The protein is Imidazole glycerol phosphate synthase subunit HisF of Haemophilus influenzae (strain 86-028NP).